A 999-amino-acid chain; its full sequence is Caspase recruitment domain-containing protein 14 (999 aa).

Positions 15-107 (DEEMLWDMLE…DVYTLVTGLQ (93 aa)) constitute a CARD domain. A coiled-coil region spans residues 125 to 411 (TECLAGAISS…QLRRLQAEAP (287 aa)). The maintains the protein in an inactive state stretch occupies residues 409–565 (EAPGGPKQEA…RRPARKILSQ (157 aa)). The residue at position 541 (S541) is a Phosphoserine. The 84-residue stretch at 572-655 (QGDALLEQIG…SCYLSVKINT (84 aa)) folds into the PDZ domain. The Guanylate kinase-like domain maps to 803 to 986 (SESCFTLAPY…LLSCVRLAIA (184 aa)).

As to quaternary structure, interacts (via CARD domain) with BCL10 (via CARD domain). Forms a complex with MALT1 and BCL10; resulting in the formation of a CBM (CARD14-BLC10-MALT1) complex. Interacts with TRAF2, TRAF3 and TRAF6.

Its subcellular location is the cytoplasm. Its function is as follows. Acts as a scaffolding protein that can activate the inflammatory transcription factor NF-kappa-B and p38/JNK MAP kinase signaling pathways. Forms a signaling complex with BCL10 and MALT1, and activates MALT1 proteolytic activity and inflammatory gene expression. MALT1 is indispensable for CARD14-induced activation of NF-kappa-B and p38/JNK MAP kinases. May play a role in signaling mediated by TRAF2, TRAF3 and TRAF6 and protects cells against apoptosis. The chain is Caspase recruitment domain-containing protein 14 (Card14) from Mus musculus (Mouse).